The primary structure comprises 77 residues: UPF0349 protein lwe2340 (77 aa).

It belongs to the UPF0349 family.

This Listeria welshimeri serovar 6b (strain ATCC 35897 / DSM 20650 / CCUG 15529 / CIP 8149 / NCTC 11857 / SLCC 5334 / V8) protein is UPF0349 protein lwe2340.